A 226-amino-acid chain; its full sequence is UPF0173 metal-dependent hydrolase SRU_1937 (226 aa).

The protein belongs to the UPF0173 family.

The protein is UPF0173 metal-dependent hydrolase SRU_1937 of Salinibacter ruber (strain DSM 13855 / M31).